The sequence spans 198 residues: TATA-box-binding protein (198 aa).

2 repeat units span residues 14–90 (IENI…IKTL) and 105–181 (IQNI…FDKL).

Belongs to the TBP family.

In terms of biological role, general factor that plays a role in the activation of archaeal genes transcribed by RNA polymerase. Binds specifically to the TATA box promoter element which lies close to the position of transcription initiation. The sequence is that of TATA-box-binding protein from Saccharolobus shibatae (strain ATCC 51178 / DSM 5389 / JCM 8931 / NBRC 15437 / B12) (Sulfolobus shibatae).